The sequence spans 141 residues: Putative pre-16S rRNA nuclease (141 aa).

It belongs to the YqgF nuclease family.

It is found in the cytoplasm. Its function is as follows. Could be a nuclease involved in processing of the 5'-end of pre-16S rRNA. This Dictyoglomus turgidum (strain DSM 6724 / Z-1310) protein is Putative pre-16S rRNA nuclease.